The primary structure comprises 267 residues: Actin maturation protease (267 aa).

The segment at 1-32 (MSNISSVAPPPPPPPMIVTPSTPATTKERPVG) is disordered. Residues 8–17 (APPPPPPPMI) show a composition bias toward pro residues. The tract at residues 74 to 188 (SIVQVGPTCG…WALIVGYLVD (115 aa)) is peptidase C39-like. Cys82 is a catalytic residue.

This sequence belongs to the ACTMAP family.

The catalysed reaction is N-terminal N(alpha)-acetyl-L-cysteinyl-L-aspartyl-[protein] + H2O = N-terminal L-aspartyl-[protein] + N-acetyl-L-cysteine. In terms of biological role, actin maturation protease that specifically mediates the cleavage of immature acetylated N-terminal actin, thereby contributing to actin maturation. The polypeptide is Actin maturation protease (Drosophila melanogaster (Fruit fly)).